A 156-amino-acid polypeptide reads, in one-letter code: RNA polymerase sigma factor SigS (156 aa).

The short motif at 29 to 44 (EYYQLLLIKMWQLSQI) is the Polymerase core binding element. The segment at residues 126–145 (QYEIADIMSLSTSTIKLIKA) is a DNA-binding region (H-T-H motif).

This sequence belongs to the sigma-70 factor family.

Functionally, sigma factors are initiation factors that promote the attachment of RNA polymerase to specific initiation sites and are then released. Sigma-S contributes to the protection against external stress, thus playing a role in cellular fitness and survival. The protein is RNA polymerase sigma factor SigS (sigS) of Staphylococcus aureus (strain MRSA252).